Reading from the N-terminus, the 343-residue chain is Phenylalanine--tRNA ligase alpha subunit (343 aa).

Residue Glu268 coordinates Mg(2+).

Belongs to the class-II aminoacyl-tRNA synthetase family. Phe-tRNA synthetase alpha subunit type 1 subfamily. Tetramer of two alpha and two beta subunits. The cofactor is Mg(2+).

Its subcellular location is the cytoplasm. It carries out the reaction tRNA(Phe) + L-phenylalanine + ATP = L-phenylalanyl-tRNA(Phe) + AMP + diphosphate + H(+). This is Phenylalanine--tRNA ligase alpha subunit from Cupriavidus taiwanensis (strain DSM 17343 / BCRC 17206 / CCUG 44338 / CIP 107171 / LMG 19424 / R1) (Ralstonia taiwanensis (strain LMG 19424)).